A 141-amino-acid polypeptide reads, in one-letter code: Hemoglobin subunit alpha-3 (141 aa).

The Globin domain occupies 1–141 (VLSPADKTNV…VSTVLTSKYR (141 aa)). Position 58 (H58) interacts with O2. Residue H87 coordinates heme b.

The protein belongs to the globin family. In terms of assembly, heterotetramer of two alpha chains and two beta chains. As to expression, red blood cells.

Functionally, involved in oxygen transport from the lung to the various peripheral tissues. The polypeptide is Hemoglobin subunit alpha-3 (Pan troglodytes (Chimpanzee)).